The primary structure comprises 336 residues: 4-hydroxy-3-methylbut-2-enyl diphosphate reductase (336 aa).

Cys-37 lines the [4Fe-4S] cluster pocket. Residues His-66 and His-99 each contribute to the (2E)-4-hydroxy-3-methylbut-2-enyl diphosphate site. Dimethylallyl diphosphate-binding residues include His-66 and His-99. Isopentenyl diphosphate contacts are provided by His-66 and His-99. Cys-121 provides a ligand contact to [4Fe-4S] cluster. His-149 is a (2E)-4-hydroxy-3-methylbut-2-enyl diphosphate binding site. His-149 contacts dimethylallyl diphosphate. His-149 contributes to the isopentenyl diphosphate binding site. The Proton donor role is filled by Glu-151. Thr-189 is a binding site for (2E)-4-hydroxy-3-methylbut-2-enyl diphosphate. [4Fe-4S] cluster is bound at residue Cys-219. (2E)-4-hydroxy-3-methylbut-2-enyl diphosphate-binding residues include Ser-247, Ser-248, Asn-249, and Ser-292. 4 residues coordinate dimethylallyl diphosphate: Ser-247, Ser-248, Asn-249, and Ser-292. Isopentenyl diphosphate-binding residues include Ser-247, Ser-248, Asn-249, and Ser-292.

This sequence belongs to the IspH family. Requires [4Fe-4S] cluster as cofactor.

It carries out the reaction isopentenyl diphosphate + 2 oxidized [2Fe-2S]-[ferredoxin] + H2O = (2E)-4-hydroxy-3-methylbut-2-enyl diphosphate + 2 reduced [2Fe-2S]-[ferredoxin] + 2 H(+). The catalysed reaction is dimethylallyl diphosphate + 2 oxidized [2Fe-2S]-[ferredoxin] + H2O = (2E)-4-hydroxy-3-methylbut-2-enyl diphosphate + 2 reduced [2Fe-2S]-[ferredoxin] + 2 H(+). The protein operates within isoprenoid biosynthesis; dimethylallyl diphosphate biosynthesis; dimethylallyl diphosphate from (2E)-4-hydroxy-3-methylbutenyl diphosphate: step 1/1. It functions in the pathway isoprenoid biosynthesis; isopentenyl diphosphate biosynthesis via DXP pathway; isopentenyl diphosphate from 1-deoxy-D-xylulose 5-phosphate: step 6/6. Its function is as follows. Catalyzes the conversion of 1-hydroxy-2-methyl-2-(E)-butenyl 4-diphosphate (HMBPP) into a mixture of isopentenyl diphosphate (IPP) and dimethylallyl diphosphate (DMAPP). Acts in the terminal step of the DOXP/MEP pathway for isoprenoid precursor biosynthesis. This is 4-hydroxy-3-methylbut-2-enyl diphosphate reductase from Nocardia farcinica (strain IFM 10152).